The chain runs to 126 residues: Glycine cleavage system H protein (126 aa).

The region spanning 22–103 (KAYIGITDYA…PYGSWMALVE (82 aa)) is the Lipoyl-binding domain. Lys63 is subject to N6-lipoyllysine.

It belongs to the GcvH family. In terms of assembly, the glycine cleavage system is composed of four proteins: P, T, L and H. (R)-lipoate serves as cofactor.

Its function is as follows. The glycine cleavage system catalyzes the degradation of glycine. The H protein shuttles the methylamine group of glycine from the P protein to the T protein. The polypeptide is Glycine cleavage system H protein (Thermoanaerobacter sp. (strain X514)).